The following is a 164-amino-acid chain: Glutamate uptake regulatory protein (164 aa).

The HTH asnC-type domain occupies 5–66 (LDDFDIKILD…LLDPQKIGLG (62 aa)). A DNA-binding region (H-T-H motif) is located at residues 24-43 (MAELSEKTGLSANACWRRIR).

Represses the secondary, H(+)-coupled glutamate uptake system (Gluemp) genes. This Zymomonas mobilis subsp. mobilis (strain ATCC 10988 / DSM 424 / LMG 404 / NCIMB 8938 / NRRL B-806 / ZM1) protein is Glutamate uptake regulatory protein (grp).